Here is a 191-residue protein sequence, read N- to C-terminus: Large ribosomal subunit protein bL9 (191 aa).

Belongs to the bacterial ribosomal protein bL9 family.

Binds to the 23S rRNA. This is Large ribosomal subunit protein bL9 from Granulibacter bethesdensis (strain ATCC BAA-1260 / CGDNIH1).